Consider the following 532-residue polypeptide: Glutamate--cysteine ligase (532 aa).

Belongs to the glutamate--cysteine ligase type 1 family. Type 1 subfamily.

It catalyses the reaction L-cysteine + L-glutamate + ATP = gamma-L-glutamyl-L-cysteine + ADP + phosphate + H(+). Its pathway is sulfur metabolism; glutathione biosynthesis; glutathione from L-cysteine and L-glutamate: step 1/2. The protein is Glutamate--cysteine ligase of Pseudomonas fluorescens (strain ATCC BAA-477 / NRRL B-23932 / Pf-5).